We begin with the raw amino-acid sequence, 357 residues long: 4-hydroxy-3-methylbut-2-en-1-yl diphosphate synthase (flavodoxin) (357 aa).

[4Fe-4S] cluster is bound by residues cysteine 264, cysteine 267, cysteine 299, and glutamate 306.

This sequence belongs to the IspG family. Requires [4Fe-4S] cluster as cofactor.

The enzyme catalyses (2E)-4-hydroxy-3-methylbut-2-enyl diphosphate + oxidized [flavodoxin] + H2O + 2 H(+) = 2-C-methyl-D-erythritol 2,4-cyclic diphosphate + reduced [flavodoxin]. The protein operates within isoprenoid biosynthesis; isopentenyl diphosphate biosynthesis via DXP pathway; isopentenyl diphosphate from 1-deoxy-D-xylulose 5-phosphate: step 5/6. Its function is as follows. Converts 2C-methyl-D-erythritol 2,4-cyclodiphosphate (ME-2,4cPP) into 1-hydroxy-2-methyl-2-(E)-butenyl 4-diphosphate. This Campylobacter jejuni subsp. jejuni serotype O:2 (strain ATCC 700819 / NCTC 11168) protein is 4-hydroxy-3-methylbut-2-en-1-yl diphosphate synthase (flavodoxin).